The primary structure comprises 534 residues: Cyclin-L1 (534 aa).

Cyclin-like stretches follow at residues 94–196 (ELIQ…RVLK) and 209–293 (KIIV…KILQ). The disordered stretch occupies residues 327–534 (LPEGAPVLDN…DHPGHSRHRR (208 aa)). Basic and acidic residues predominate over residues 389–399 (KGRESRSRSGS). 2 stretches are compositionally biased toward low complexity: residues 400–412 (RDQS…SRSA) and 437–453 (RSGS…TYKS). The tract at residues 400 to 436 (RDQSYSRSPSRSASPKHRKSESYSTSSGSKSHSRSRS) is RS. Residues 468–485 (SAHKARKSRSRSSSRSRS) show a composition bias toward basic residues. Residues 486–495 (RSRERSDHSG) are compositionally biased toward basic and acidic residues. Positions 496 to 511 (KYKKKSHYYRNHRHER) are enriched in basic residues. The span at 512-528 (SRSYERASHRYDRDHPG) shows a compositional bias: basic and acidic residues.

This sequence belongs to the cyclin family. Cyclin L subfamily.

Its subcellular location is the nucleus speckle. It is found in the nucleus. The protein localises to the nucleoplasm. Its function is as follows. Involved in pre-mRNA splicing. The chain is Cyclin-L1 (CCNL1) from Gallus gallus (Chicken).